A 437-amino-acid polypeptide reads, in one-letter code: Protein translocase subunit SecY (437 aa).

The next 10 membrane-spanning stretches (helical) occupy residues 19–39 (LFTL…APGV), 68–88 (LLQI…SIIL), 121–141 (VALA…GALF), 156–176 (IFTT…VMWL), 188–208 (GMSI…LWAI), 218–238 (WIEF…VVFV), 274–294 (GVIP…IVQF), 317–337 (YIAT…AISF), 378–398 (SLYL…FGGA), and 400–420 (QNFP…LETV).

Belongs to the SecY/SEC61-alpha family. In terms of assembly, component of the Sec protein translocase complex. Heterotrimer consisting of SecY, SecE and SecG subunits. The heterotrimers can form oligomers, although 1 heterotrimer is thought to be able to translocate proteins. Interacts with the ribosome. Interacts with SecDF, and other proteins may be involved. Interacts with SecA.

The protein resides in the cell membrane. In terms of biological role, the central subunit of the protein translocation channel SecYEG. Consists of two halves formed by TMs 1-5 and 6-10. These two domains form a lateral gate at the front which open onto the bilayer between TMs 2 and 7, and are clamped together by SecE at the back. The channel is closed by both a pore ring composed of hydrophobic SecY resides and a short helix (helix 2A) on the extracellular side of the membrane which forms a plug. The plug probably moves laterally to allow the channel to open. The ring and the pore may move independently. The polypeptide is Protein translocase subunit SecY (Streptomyces griseus).